The sequence spans 236 residues: Uridylate kinase (236 aa).

Position 10–13 (10–13) interacts with ATP; it reads KLSG. Residues 18–23 form an involved in allosteric activation by GTP region; that stretch reads GEDGYG. Gly52 provides a ligand contact to UMP. Residues Gly53 and Arg57 each contribute to the ATP site. Residues Asp72 and 133-140 contribute to the UMP site; that span reads TGNPYFTT. ATP-binding residues include Thr160, Tyr166, and Asp169.

Belongs to the UMP kinase family. In terms of assembly, homohexamer.

The protein localises to the cytoplasm. The catalysed reaction is UMP + ATP = UDP + ADP. The protein operates within pyrimidine metabolism; CTP biosynthesis via de novo pathway; UDP from UMP (UMPK route): step 1/1. Allosterically activated by GTP. Inhibited by UTP. In terms of biological role, catalyzes the reversible phosphorylation of UMP to UDP. This Chlorobium phaeobacteroides (strain DSM 266 / SMG 266 / 2430) protein is Uridylate kinase.